We begin with the raw amino-acid sequence, 89 residues long: UPF0367 protein CYA_1023 (89 aa).

A disordered region spans residues 69–89 (TKSGGPGAPGTRPGFLAQLQG).

The protein belongs to the UPF0367 family.

The sequence is that of UPF0367 protein CYA_1023 from Synechococcus sp. (strain JA-3-3Ab) (Cyanobacteria bacterium Yellowstone A-Prime).